The following is a 113-amino-acid chain: Holo-[acyl-carrier-protein] synthase (113 aa).

Mg(2+)-binding residues include Asp-5 and Glu-50.

Belongs to the P-Pant transferase superfamily. AcpS family. The cofactor is Mg(2+).

The protein localises to the cytoplasm. The catalysed reaction is apo-[ACP] + CoA = holo-[ACP] + adenosine 3',5'-bisphosphate + H(+). Functionally, transfers the 4'-phosphopantetheine moiety from coenzyme A to a Ser of acyl-carrier-protein. In Nautilia profundicola (strain ATCC BAA-1463 / DSM 18972 / AmH), this protein is Holo-[acyl-carrier-protein] synthase.